A 348-amino-acid chain; its full sequence is Maintenance of mitochondrial morphology protein 1 (348 aa).

Topologically, residues 1-35 (MAGKADLGHTGISDNIVERQIFVPQPNNAWSFTQG) are lumenal. The chain crosses the membrane as a helical span at residues 36–56 (LMCGQASVVVVLLVFIKFFVF). Topologically, residues 57 to 348 (SEAPPSSGAA…GKTEKVNGNE (292 aa)) are cytoplasmic. Residues 114-323 (NPESLDWFNV…EPKFQVVRLP (210 aa)) enclose the SMP-LTD domain. Residues 328-348 (RSKNTREPVGAGKTEKVNGNE) are disordered.

Belongs to the MMM1 family. As to quaternary structure, homodimer. Component of the ER-mitochondria encounter structure (ERMES) or MDM complex, composed of MMM1, MDM10, MDM12 and MDM34. An MMM1 homodimer associates with one molecule of MDM12 on each side in a pairwise head-to-tail manner, and the SMP-LTD domains of MMM1 and MDM12 generate a continuous hydrophobic tunnel for phospholipid trafficking.

Its subcellular location is the endoplasmic reticulum membrane. Component of the ERMES/MDM complex, which serves as a molecular tether to connect the endoplasmic reticulum (ER) and mitochondria. Components of this complex are involved in the control of mitochondrial shape and protein biogenesis, and function in nonvesicular lipid trafficking between the ER and mitochondria. The MDM12-MMM1 subcomplex functions in the major beta-barrel assembly pathway that is responsible for biogenesis of all outer membrane beta-barrel proteins, and acts in a late step after the SAM complex. The MDM10-MDM12-MMM1 subcomplex further acts in the TOM40-specific pathway after the action of the MDM12-MMM1 complex. Essential for establishing and maintaining the structure of mitochondria and maintenance of mtDNA nucleoids. The protein is Maintenance of mitochondrial morphology protein 1 of Clavispora lusitaniae (strain ATCC 42720) (Yeast).